The primary structure comprises 235 residues: LexA repressor (235 aa).

Positions 26 to 46 (FDEMKDALDLKSKSGIHRLIT) form a DNA-binding region, H-T-H motif. Residues S156 and K194 each act as for autocatalytic cleavage activity in the active site.

The protein belongs to the peptidase S24 family. In terms of assembly, homodimer.

It carries out the reaction Hydrolysis of Ala-|-Gly bond in repressor LexA.. Functionally, represses a number of genes involved in the response to DNA damage (SOS response), including recA and lexA. In the presence of single-stranded DNA, RecA interacts with LexA causing an autocatalytic cleavage which disrupts the DNA-binding part of LexA, leading to derepression of the SOS regulon and eventually DNA repair. This chain is LexA repressor, found in Paramagnetospirillum magneticum (strain ATCC 700264 / AMB-1) (Magnetospirillum magneticum).